We begin with the raw amino-acid sequence, 260 residues long: Putative protein phosphatase 2C-like protein 44 (260 aa).

Residues 41 to 259 (YYTVDRLSYA…SSISCVVIRF (219 aa)) enclose the PPM-type phosphatase domain.

The protein belongs to the PP2C family.

The polypeptide is Putative protein phosphatase 2C-like protein 44 (Arabidopsis thaliana (Mouse-ear cress)).